Consider the following 474-residue polypeptide: P2X purinoceptor 2 (474 aa).

Residues M1–R42 lie on the Cytoplasmic side of the membrane. A helical membrane pass occupies residues A43–Q60. The Extracellular segment spans residues K61–S333. K77 and K79 together coordinate ATP. Cystine bridges form between C121–C172, C132–C155, and C138–C166. N-linked (GlcNAc...) asparagine glycosylation is present at N129. A glycan (N-linked (GlcNAc...) asparagine) is linked at N190. ATP is bound at residue T192. C222 and C232 are oxidised to a cystine. N-linked (GlcNAc...) asparagine glycosylation occurs at N247. A disulfide bond links C266 and C275. 3 residues coordinate ATP: S292, N296, and R298. N-linked (GlcNAc...) asparagine glycosylation is present at N306. K315 serves as a coordination point for ATP. The tract at residues A316–A329 is pore-forming motif. The helical transmembrane segment at L334–L354 threads the bilayer. Residues C355–L474 are Cytoplasmic-facing. Residues P445 to L474 are disordered. Over residues L453–T466 the composition is skewed to polar residues.

The protein belongs to the P2X receptor family. In terms of assembly, homotrimer and heterotrimer; functional P2XRs are organized as homomeric and heteromeric trimers. Homotrimer. Forms heterodimer with P2RX1. Forms heterotrimer with P2RX6. Forms heterotrimer with P2RX3. As to expression, express in organ of Corti.

The protein localises to the cell membrane. The catalysed reaction is Ca(2+)(in) = Ca(2+)(out). It carries out the reaction K(+)(in) = K(+)(out). The enzyme catalyses Na(+)(in) = Na(+)(out). Fast activation by external ATP. Exhibits slow desensitization during prolonged ATP activation. Not sensitive to the ATP agonist:alpha/beta-methylene-ATP. Functionally, ATP-gated nonselective transmembrane cation channel permeable to potassium, sodium and calcium. Activation by extracellular ATP induces a variety of cellular responses, such as excitatory postsynaptic responses in sensory neurons, neuromuscular junctions (NMJ) formation, hearing, perception of taste and peristalsis. In the inner ear, regulates sound transduction and auditory neurotransmission, outer hair cell electromotility, inner ear gap junctions, and K(+) recycling. Mediates synaptic transmission between neurons and from neurons to smooth muscle. The polypeptide is P2X purinoceptor 2 (P2RX2) (Cavia porcellus (Guinea pig)).